Consider the following 415-residue polypeptide: Serine hydroxymethyltransferase (415 aa).

Residues Leu-121 and 125–127 (GHL) each bind (6S)-5,6,7,8-tetrahydrofolate. Lys-230 is subject to N6-(pyridoxal phosphate)lysine. (6S)-5,6,7,8-tetrahydrofolate is bound at residue 355 to 357 (SPF).

This sequence belongs to the SHMT family. Homodimer. It depends on pyridoxal 5'-phosphate as a cofactor.

It localises to the cytoplasm. The catalysed reaction is (6R)-5,10-methylene-5,6,7,8-tetrahydrofolate + glycine + H2O = (6S)-5,6,7,8-tetrahydrofolate + L-serine. The protein operates within one-carbon metabolism; tetrahydrofolate interconversion. It participates in amino-acid biosynthesis; glycine biosynthesis; glycine from L-serine: step 1/1. Catalyzes the reversible interconversion of serine and glycine with tetrahydrofolate (THF) serving as the one-carbon carrier. This reaction serves as the major source of one-carbon groups required for the biosynthesis of purines, thymidylate, methionine, and other important biomolecules. Also exhibits THF-independent aldolase activity toward beta-hydroxyamino acids, producing glycine and aldehydes, via a retro-aldol mechanism. This is Serine hydroxymethyltransferase from Lactococcus lactis subsp. cremoris (strain MG1363).